Consider the following 313-residue polypeptide: Biotin synthase (313 aa).

The Radical SAM core domain maps to 28-258 (NFGNDIELCS…LFPQARLRLS (231 aa)). [4Fe-4S] cluster is bound by residues Cys-46, Cys-50, and Cys-53. 4 residues coordinate [2Fe-2S] cluster: Cys-90, Cys-121, Cys-181, and Arg-256.

It belongs to the radical SAM superfamily. Biotin synthase family. In terms of assembly, homodimer. It depends on [4Fe-4S] cluster as a cofactor. The cofactor is [2Fe-2S] cluster.

It carries out the reaction (4R,5S)-dethiobiotin + (sulfur carrier)-SH + 2 reduced [2Fe-2S]-[ferredoxin] + 2 S-adenosyl-L-methionine = (sulfur carrier)-H + biotin + 2 5'-deoxyadenosine + 2 L-methionine + 2 oxidized [2Fe-2S]-[ferredoxin]. It functions in the pathway cofactor biosynthesis; biotin biosynthesis; biotin from 7,8-diaminononanoate: step 2/2. Its function is as follows. Catalyzes the conversion of dethiobiotin (DTB) to biotin by the insertion of a sulfur atom into dethiobiotin via a radical-based mechanism. This is Biotin synthase from Francisella tularensis subsp. tularensis (strain FSC 198).